We begin with the raw amino-acid sequence, 231 residues long: MATVSDLALLLVAGLVAISLHMQEAGAVKFELKNQCEYTVWAAGLPGGGQQLDQGQTWPVEVPAGTKGARFWGRTGCSFDASGRGTCKTGDCNSQLSCQVSGGVPTTLAEYTLNGDGNKDFYDVSLVDGFNVPLSINPTNSQCFAPACKADVNAACPAQLKVDGGCNSACTVFQTDEYCCRGTHVDNCSPSSYSMIFKNQCPQAYSYAKDDSSSTFTCPSGTTDYSIVFCP.

The N-terminal stretch at 1-27 (MATVSDLALLLVAGLVAISLHMQEAGA) is a signal peptide. 8 disulfide bridges follow: Cys-36/Cys-230, Cys-77/Cys-87, Cys-92/Cys-98, Cys-143/Cys-218, Cys-148/Cys-201, Cys-156/Cys-166, Cys-170/Cys-179, and Cys-180/Cys-188.

Belongs to the thaumatin family.

May be involved in disease resistance. This Cryptomeria japonica (Japanese cedar) protein is Pathogenesis-related thaumatin-like protein 3.7.